A 530-amino-acid polypeptide reads, in one-letter code: GATA zinc finger domain-containing protein 4 (530 aa).

2 disordered regions span residues 1-27 and 212-386; these read MSINHFNNNKNNNNKNNKNNEENFWDN and STVV…INNN. Low complexity-rich tracts occupy residues 7-17, 216-290, and 299-386; these read NNNKNNNNKNN, SNSP…FNNN, and NSNN…INNN. The GATA-type zinc-finger motif lies at 494 to 518; sequence CSMCNIKESISWIKTMVNGQLCNAC.

This chain is GATA zinc finger domain-containing protein 4 (gtaD), found in Dictyostelium discoideum (Social amoeba).